The chain runs to 44 residues: uncharacterized protein (44 aa).

This is an uncharacterized protein from Bacillus subtilis (Bacteriophage phi-105).